A 69-amino-acid polypeptide reads, in one-letter code: Protein SlyX homolog (69 aa).

It belongs to the SlyX family.

The chain is Protein SlyX homolog from Pseudomonas paraeruginosa (strain DSM 24068 / PA7) (Pseudomonas aeruginosa (strain PA7)).